Consider the following 299-residue polypeptide: Dye-decolorizing peroxidase YfeX (299 aa).

Position 215 (histidine 215) interacts with heme.

The protein belongs to the DyP-type peroxidase family. Requires heme b as cofactor.

The protein localises to the cytoplasm. In terms of biological role, has both general peroxidase activity and dye-decolorizing activity. Can catalyze the oxidation of 2,2'-azino-bis(3-ethylbenzothiazoline-6-sulphonic acid) (ABTS), and the phenolic compounds guaiacol and catechol. Also decolorizes the anthraquinone dye reactive blue 19 (RB19). This chain is Dye-decolorizing peroxidase YfeX, found in Escherichia coli O157:H7.